The chain runs to 177 residues: Adenine phosphoribosyltransferase (177 aa).

The protein belongs to the purine/pyrimidine phosphoribosyltransferase family. Homodimer.

The protein localises to the cytoplasm. It carries out the reaction AMP + diphosphate = 5-phospho-alpha-D-ribose 1-diphosphate + adenine. Its pathway is purine metabolism; AMP biosynthesis via salvage pathway; AMP from adenine: step 1/1. In terms of biological role, catalyzes a salvage reaction resulting in the formation of AMP, that is energically less costly than de novo synthesis. The protein is Adenine phosphoribosyltransferase of Chlorobium phaeovibrioides (strain DSM 265 / 1930) (Prosthecochloris vibrioformis (strain DSM 265)).